The chain runs to 402 residues: Arginine biosynthesis bifunctional protein ArgJ (402 aa).

Thr152, Lys178, Thr189, Glu275, Asn397, and Thr402 together coordinate substrate. Thr189 functions as the Nucleophile in the catalytic mechanism.

The protein belongs to the ArgJ family. Heterotetramer of two alpha and two beta chains.

It localises to the cytoplasm. The enzyme catalyses N(2)-acetyl-L-ornithine + L-glutamate = N-acetyl-L-glutamate + L-ornithine. It carries out the reaction L-glutamate + acetyl-CoA = N-acetyl-L-glutamate + CoA + H(+). It participates in amino-acid biosynthesis; L-arginine biosynthesis; L-ornithine and N-acetyl-L-glutamate from L-glutamate and N(2)-acetyl-L-ornithine (cyclic): step 1/1. Its pathway is amino-acid biosynthesis; L-arginine biosynthesis; N(2)-acetyl-L-ornithine from L-glutamate: step 1/4. Its function is as follows. Catalyzes two activities which are involved in the cyclic version of arginine biosynthesis: the synthesis of N-acetylglutamate from glutamate and acetyl-CoA as the acetyl donor, and of ornithine by transacetylation between N(2)-acetylornithine and glutamate. The polypeptide is Arginine biosynthesis bifunctional protein ArgJ (Symbiobacterium thermophilum (strain DSM 24528 / JCM 14929 / IAM 14863 / T)).